Here is a 72-residue protein sequence, read N- to C-terminus: Small ribosomal subunit protein bS18 (72 aa).

The protein belongs to the bacterial ribosomal protein bS18 family. In terms of assembly, part of the 30S ribosomal subunit. Forms a tight heterodimer with protein bS6.

Functionally, binds as a heterodimer with protein bS6 to the central domain of the 16S rRNA, where it helps stabilize the platform of the 30S subunit. In Trichodesmium erythraeum (strain IMS101), this protein is Small ribosomal subunit protein bS18.